The chain runs to 238 residues: Protein odd-skipped-related 2 (238 aa).

The disordered stretch occupies residues 105–126; the sequence is EDPPVTGQSRLSPERRPARGRL. 3 consecutive C2H2-type zinc fingers follow at residues 134–156, 162–184, and 190–212; these read FICRFCGRHFTKSYNLLIHERTH, YTCDICHKAFRRQDHLRDHRYIH, and FKCQECGKGFCQSRTLAVHKTLH.

This sequence belongs to the Odd C2H2-type zinc-finger protein family. In terms of tissue distribution, at the 8-somite stage, expressed in the pronephros, with weak generalized expression elsewhere. At 24 hpf, expressed in the kidney tubules and the anterior duct, and also in the gut. At 60 hpf, expressed in the tubules and the pectoral fin buds.

The protein localises to the nucleus. Functionally, transcriptional repressor. Required for pronephric kidney development. This is Protein odd-skipped-related 2 from Danio rerio (Zebrafish).